Consider the following 127-residue polypeptide: Large ribosomal subunit protein bL17 (127 aa).

The protein belongs to the bacterial ribosomal protein bL17 family. Part of the 50S ribosomal subunit. Contacts protein L32.

In Stenotrophomonas maltophilia (strain K279a), this protein is Large ribosomal subunit protein bL17.